We begin with the raw amino-acid sequence, 512 residues long: GMP synthase [glutamine-hydrolyzing] (512 aa).

The 191-residue stretch at Thr7–Gly197 folds into the Glutamine amidotransferase type-1 domain. Catalysis depends on Cys84, which acts as the Nucleophile. Active-site residues include His171 and Glu173. The 190-residue stretch at Trp198–Arg387 folds into the GMPS ATP-PPase domain. Ser225–Ser231 is an ATP binding site.

In terms of assembly, homodimer.

It catalyses the reaction XMP + L-glutamine + ATP + H2O = GMP + L-glutamate + AMP + diphosphate + 2 H(+). The protein operates within purine metabolism; GMP biosynthesis; GMP from XMP (L-Gln route): step 1/1. Functionally, catalyzes the synthesis of GMP from XMP. This chain is GMP synthase [glutamine-hydrolyzing], found in Bacillus cereus (strain B4264).